A 1381-amino-acid polypeptide reads, in one-letter code: Non-structural polyprotein 1AB (1381 aa).

The stretch at 121–160 (VLVQEHKKLDSDLKESRRELSQLKLEHSLLRHDYERLVRE) forms a coiled coil. 5 consecutive transmembrane segments (helical) span residues 169-189 (FKFSAVIFYAFFLGFLLMSAV), 249-269 (LALGYFPYFANWHMAAFLVGT), 279-299 (LYMLVTLVLATLSRFQLVALA), 324-344 (AFAILASVLISVLLLILCLAM), and 365-385 (FSHLVSFLHAPGWFTIIAILI). Catalysis depends on charge relay system; for serine protease activity residues His-477, Asp-506, and Ser-569. Tyr-694 is modified (O-(5'-phospho-RNA)-tyrosine). The stretch at 703-732 (TRDQLREMAEAAREADDDFDDYEEEKNEVD) forms a coiled coil. The interval 856–879 (MQRKKQKPKKREEGPERGPINPDE) is disordered. Residues 1122–1254 (SVFIEFDWTR…TFDHVPPDYV (133 aa)) enclose the RdRp catalytic domain.

This sequence belongs to the astroviridae polyprotein 1AB family. As to quaternary structure, monomer. Post-translationally, cleaved by the viral and host proteases. The protease is probably autocatalytically cleaved.

It is found in the host membrane. The enzyme catalyses RNA(n) + a ribonucleoside 5'-triphosphate = RNA(n+1) + diphosphate. Functionally, responsible for the cleavage of the polyprotein into functional products. In terms of biological role, protein covalently attached to the 5' extremity of the genomic and subgenomic RNAs. It may serve as a primer for the replicase. This chain is Non-structural polyprotein 1AB (ORF1), found in Neovison vison (American mink).